The primary structure comprises 208 residues: MDTCGIYNSDNEEFSQENDGENDGGDKIIKNLPFASYDERLNSFQNWPIQLLPSKEQLSRAGFIYLNIGDQVQCFYCDLKLKEWKRSDNPFEEHKKHTQDLKINCLFVKSIEFDNFVKNHSESCFQNPITNNINQDLDHNQDLDHNQDLDQNSTTSDCDVLTCKICFTNKITKVLIPCGHSSCYECVFKLQTCPICKNNFIKINNLFI.

Positions 1–25 are disordered; it reads MDTCGIYNSDNEEFSQENDGENDGG. Positions 10-23 are enriched in acidic residues; the sequence is DNEEFSQENDGEND. The BIR repeat unit spans residues 37 to 108; it reads YDERLNSFQN…QDLKINCLFV (72 aa). 4 residues coordinate Zn(2+): Cys74, Cys77, His94, and Cys105. Repeat copies occupy residues 134–139, 140–145, and 146–151. The 3 X 6 AA tandem repeats stretch occupies residues 134-151; that stretch reads NQDLDHNQDLDHNQDLDQ. An RING-type zinc finger spans residues 163-197; that stretch reads CKICFTNKITKVLIPCGHSSCYECVFKLQTCPICK.

This sequence belongs to the IIV-6 193R family.

In terms of biological role, plays a role early in infection by preventing host cell apoptosis. This is Apoptosis inhibitor 193R from Invertebrate iridescent virus 6 (IIV-6).